Consider the following 1220-residue polypeptide: DNA-directed RNA polymerase subunit beta (1220 aa).

Belongs to the RNA polymerase beta chain family. In terms of assembly, the RNAP catalytic core consists of 2 alpha, 1 beta, 1 beta' and 1 omega subunit. When a sigma factor is associated with the core the holoenzyme is formed, which can initiate transcription.

It catalyses the reaction RNA(n) + a ribonucleoside 5'-triphosphate = RNA(n+1) + diphosphate. Functionally, DNA-dependent RNA polymerase catalyzes the transcription of DNA into RNA using the four ribonucleoside triphosphates as substrates. This is DNA-directed RNA polymerase subunit beta from Mesomycoplasma hyopneumoniae (strain 7448) (Mycoplasma hyopneumoniae).